The sequence spans 505 residues: Apolipoprotein N-acyltransferase (505 aa).

Helical transmembrane passes span 6-26 (PSILVACILSFCLGAIGCLAF), 29-49 (FDIWLIAYLSAAGLIWAATLV), 53-73 (TAMLATFAWSIGYFGVGVQWV), 80-100 (FGGVPVIVSYLAVLLLASYLG), 119-139 (FVLASLFTFTEYLRGVVFTGF), 152-172 (PFAQLAPIFGVEGLTFLVILL), and 189-209 (TFTKIAVIIGFSLASNLLQFV). Residues 223–469 (IQANIEQQLK…TNTLTAEIAT (247 aa)) enclose the CN hydrolase domain. Glu263 (proton acceptor) is an active-site residue. The active site involves Lys328. The active-site Nucleophile is the Cys379. Residues 475–495 (LFGQFGHWLIYSLSFICVAFG) form a helical membrane-spanning segment.

It belongs to the CN hydrolase family. Apolipoprotein N-acyltransferase subfamily.

It is found in the cell inner membrane. It carries out the reaction N-terminal S-1,2-diacyl-sn-glyceryl-L-cysteinyl-[lipoprotein] + a glycerophospholipid = N-acyl-S-1,2-diacyl-sn-glyceryl-L-cysteinyl-[lipoprotein] + a 2-acyl-sn-glycero-3-phospholipid + H(+). The protein operates within protein modification; lipoprotein biosynthesis (N-acyl transfer). In terms of biological role, catalyzes the phospholipid dependent N-acylation of the N-terminal cysteine of apolipoprotein, the last step in lipoprotein maturation. This chain is Apolipoprotein N-acyltransferase, found in Haemophilus ducreyi (strain 35000HP / ATCC 700724).